A 114-amino-acid chain; its full sequence is Protein vCCL3 (114 aa).

Residues 1 to 26 (MWSMCWVLRAHLGLLFWVAVIELCAA) form the signal peptide.

Acts as a highly selective agonist for human lymphoactin receptor XCR1. The polypeptide is Protein vCCL3 (K4.1) (Human herpesvirus 8 type P (isolate GK18) (HHV-8)).